The sequence spans 495 residues: Probable polyamine transporter At1g31830 (495 aa).

11 helical membrane passes run 49 to 69, 79 to 99, 112 to 132, 156 to 176, 186 to 206, 230 to 250, 267 to 287, 357 to 377, 380 to 400, 417 to 437, and 442 to 462; these read VSMLPLVFLIFYEVSGGPFGV, LLALLGFVIFPFIWSIPEALI, GYVVWVSSALGPFWGFQQGWM, VPALGSGLPRVASILVLTILL, IVGWVAVLMGVFSILPFAVMG, LYLNTLFWNLNYWDSISTLAG, VILVACSYIFPLLAGIGAIPL, TPLLGILFSASGVVLLSWLSF, IVAAENLLYCVGMILEFIAFV, IGTTGSILMCIPPTILICAVV, and LKVAAVSIVMMIIGFLIHPLL.

It belongs to the amino acid-polyamine-organocation (APC) superfamily. Polyamine:cation symporter (PHS) (TC 2.A.3.12) family.

The protein localises to the cell membrane. Probable cell membrane polyamine/proton symporter involved in the polyamine uptake in cells. This chain is Probable polyamine transporter At1g31830, found in Arabidopsis thaliana (Mouse-ear cress).